The sequence spans 202 residues: NADH-quinone oxidoreductase subunit C (202 aa).

The protein belongs to the complex I 30 kDa subunit family. NDH-1 is composed of 14 different subunits. Subunits NuoB, C, D, E, F, and G constitute the peripheral sector of the complex.

Its subcellular location is the cell inner membrane. It catalyses the reaction a quinone + NADH + 5 H(+)(in) = a quinol + NAD(+) + 4 H(+)(out). Functionally, NDH-1 shuttles electrons from NADH, via FMN and iron-sulfur (Fe-S) centers, to quinones in the respiratory chain. The immediate electron acceptor for the enzyme in this species is believed to be ubiquinone. Couples the redox reaction to proton translocation (for every two electrons transferred, four hydrogen ions are translocated across the cytoplasmic membrane), and thus conserves the redox energy in a proton gradient. This is NADH-quinone oxidoreductase subunit C from Brucella abortus (strain 2308).